The primary structure comprises 570 residues: MESLGLHTVTLSDGTTAYVQQAVKGEKLLEGQVIQLEDGTTAYIHQVTVQKEALSFEDGQPVQLEDGSMAYIHRTPREGYDPSTLEAVQLEDGSTAYIHHPVAVPSESTILAVQTEVGLEDLAAEDDEGFSADAVVALEQYASKVLHDSQIPRNGKGQQVGDRAFRCGYKGCGRLYTTAHHLKVHERAHTGDRPYRCDFPSCGKAFATGYGLKSHVRTHTGEKPYKCPEELCSKAFKTSGDLQKHVRTHTGERPFQCPFEGCGRSFTTSNIRKVHVRTHTGERPYTCPEPHCGRGFTSATNYKNHVRIHTGEKPYVCTVPGCGKRFTEYSSLYKHHVVHTHCKPYTCSTCGKTYRQTSTLAMHKRSAHGELEATEESEQALYEQQQLEAASAAEESPPPKRPRIAYLSEVKEERDDIPAQVAMVTEEDGAPQVALITQDGAQQVSLSPEDLQALGSAISMVTQHGSTTLTIPSPDADLATSGTHTVTMVSADGTQTQPVTIITSGAVVAEDSSVASLRHQQVALLATANGTHIAVQLEEQQTLEEAINVATAAMQQGAVTLETTVSESGC.

Lys24 is covalently cross-linked (Glycyl lysine isopeptide (Lys-Gly) (interchain with G-Cter in SUMO2)). A run of 3 repeats spans residues 34–45 (IQLEDGTTAYIH), 62–73 (VQLEDGSMAYIH), and 88–99 (VQLEDGSTAYIH). The interval 34 to 99 (IQLEDGTTAY…LEDGSTAYIH (66 aa)) is 3 X 12 AA approximate repeats. 7 consecutive C2H2-type zinc fingers follow at residues 165 to 189 (FRCG…ERAH), 195 to 219 (YRCD…VRTH), 225 to 249 (YKCP…VRTH), 255 to 279 (FQCP…VRTH), 285 to 309 (YTCP…VRIH), 315 to 339 (YVCT…HVVH), and 345 to 368 (YTCS…RSAH). Residues 365–401 (RSAHGELEATEESEQALYEQQQLEAASAAEESPPPKR) form a disordered region. Over residues 379–395 (QALYEQQQLEAASAAEE) the composition is skewed to low complexity.

This sequence belongs to the krueppel C2H2-type zinc-finger protein family. As to expression, testis.

It is found in the nucleus. Its function is as follows. May be involved in transcriptional regulation. This is Zinc finger protein 76 (ZNF76) from Homo sapiens (Human).